We begin with the raw amino-acid sequence, 249 residues long: Homeobox protein TGIF2LX (249 aa).

Disordered regions lie at residues 1-62 (MEAA…KRKG) and 126-192 (DPIV…KLTV). Over residues 9–27 (AETRSRVEKDSRRAKKDSP) the composition is skewed to basic and acidic residues. The span at 28 to 46 (AKTQSPAQDTSIMLRNNAD) shows a compositional bias: polar residues. The segment at residues 55-118 (EHKKKRKGYL…INARRRILPD (64 aa)) is a DNA-binding region (homeobox; TALE-type). Polar residues predominate over residues 159-172 (DNVQSLPLRSSPKG).

It belongs to the TALE/TGIF homeobox family.

The protein localises to the nucleus. In terms of biological role, may have a transcription role in testis. This Macaca fascicularis (Crab-eating macaque) protein is Homeobox protein TGIF2LX (TGIF2LX).